A 498-amino-acid polypeptide reads, in one-letter code: MADNKSENTLSSDATEVRAQKLKLLREQIGEVYPAHFHRTMTNAELIAKYENLEPDVETQDVVTVAGRVYSSRNSGMFMDIHDARGKIQIFSHKDTTPEEARALLPMIDIGDIIGVTGSVRRTKRGELTINAQTITMLTKSLLPMPEKWHGLSDIELRYRKRHLDIMTNEDSKLRFQQRSKILSGIRRFMENDGFMEVETPMLQSVYGGATAEPFKTHHNTLKLDMYLRIAPELFLKRTLISGLTDKVFEVNRNFRNEGVSTRHNPEFTMMECYWAYADYEDIMDLVERLFESLALSIHGTTEFPFGDKTMSFKGPFKRVPMPDAVKEATGIDFRAIKTDEEARVAAKAAGFAVEKDWTWGECLAFIFEEKVESTLIQPSHVTHFPKDISPFAKEVPGEPRLVERFETYCNAWELGNAFSELNDPEEQRRRMVEQLEQAHARGEKEKQLDEEFLDAIDQGMPPAGGLGIGVDRLIMLLTNAPSIRDVILFPARRSKAD.

Mg(2+)-binding residues include E407 and E414.

It belongs to the class-II aminoacyl-tRNA synthetase family. In terms of assembly, homodimer. It depends on Mg(2+) as a cofactor.

Its subcellular location is the cytoplasm. The catalysed reaction is tRNA(Lys) + L-lysine + ATP = L-lysyl-tRNA(Lys) + AMP + diphosphate. The sequence is that of Lysine--tRNA ligase from Rhizobium johnstonii (strain DSM 114642 / LMG 32736 / 3841) (Rhizobium leguminosarum bv. viciae).